A 32-amino-acid polypeptide reads, in one-letter code: U3-theraphotoxin-Hhn1r (32 aa).

3 cysteine pairs are disulfide-bonded: Cys2-Cys15, Cys9-Cys20, and Cys14-Cys27.

This sequence belongs to the neurotoxin 10 (Hwtx-1) family. 16 (Hntx-8) subfamily. Expressed by the venom gland.

It localises to the secreted. Ion channel inhibitor. The polypeptide is U3-theraphotoxin-Hhn1r (Cyriopagopus hainanus (Chinese bird spider)).